Here is a 3535-residue protein sequence, read N- to C-terminus: Lysosomal-trafficking regulator (3535 aa).

A disordered region spans residues 412–436 (MESSASTAMPKQQQHPRHKRQRSSQ). One copy of the WD 1 repeat lies at 689 to 736 (TLSRRLIQLQLNSSDRASQLFQALLYKCSKHSRAKFWLDESSTPAKLE). The segment covering 1066 to 1096 (STHQEPTGVVNSPSGDSQQPRPRARSFNSGS) has biased composition (polar residues). Disordered regions lie at residues 1066–1132 (STHQ…NAGV) and 1592–1613 (GEGQ…TLDG). The span at 1596 to 1610 (PTGRSPGSSSSSRST) shows a compositional bias: low complexity. A BEACH-type PH domain is found at 2686 to 2784 (SLNSQILYNF…MREVFCDKIV (99 aa)). The region spanning 2784–3081 (VATPDQSKVI…QLFKSPHPAS (298 aa)) is the BEACH domain. Positions 3254–3287 (GIGGGGSERVDEAGNLHPTSSASSVNSSSISSGG) are disordered. Residues 3273-3285 (SSASSVNSSSISS) are compositionally biased toward low complexity. WD repeat units lie at residues 3307–3346 (RHTD…YVRT), 3442–3486 (VHED…FVSE), and 3489–3527 (TGTS…GNAP).

As to quaternary structure, interacts with Rab5; the interaction is independent of GDP or GTP. Interacts with msps.

It is found in the vesicle. It localises to the cytoplasm. The protein resides in the cytoskeleton. Its subcellular location is the spindle. The protein localises to the spindle pole. In terms of biological role, adapter protein that regulates intracellular membrane fusion reactions. Regulates the fusion of lysosome-related organelles. Promotes microtubules nucleation and centrosomal recruitment of microtubule nucleating proteins such as msps. In syncytial embryos, during the formation of yolk granules, suppresses vesicle fusion events with lipid droplets, possibly via interaction with Rab5. In the eye, regulates pigment granules size. In hemocytes, required for the late steps of bacteria phagocytosis. In fat body, required for autophagosome maturation. In Drosophila melanogaster (Fruit fly), this protein is Lysosomal-trafficking regulator.